The primary structure comprises 73 residues: UPF0154 protein LJ_1506 (73 aa).

The helical transmembrane segment at 3–23 threads the bilayer; that stretch reads LGLAIFLIIIALLIGLVGGFY.

It belongs to the UPF0154 family.

It is found in the cell membrane. The chain is UPF0154 protein LJ_1506 from Lactobacillus johnsonii (strain CNCM I-12250 / La1 / NCC 533).